A 155-amino-acid polypeptide reads, in one-letter code: Small ribosomal subunit protein uS7 (155 aa).

The protein belongs to the universal ribosomal protein uS7 family. As to quaternary structure, part of the 30S ribosomal subunit. Contacts proteins S9 and S11.

Functionally, one of the primary rRNA binding proteins, it binds directly to 16S rRNA where it nucleates assembly of the head domain of the 30S subunit. Is located at the subunit interface close to the decoding center, probably blocks exit of the E-site tRNA. This is Small ribosomal subunit protein uS7 from Cytophaga hutchinsonii (strain ATCC 33406 / DSM 1761 / CIP 103989 / NBRC 15051 / NCIMB 9469 / D465).